The primary structure comprises 357 residues: DNA replication and repair protein RecF (357 aa).

Residue 30 to 37 (GANGSGKT) participates in ATP binding.

It belongs to the RecF family.

Its subcellular location is the cytoplasm. Its function is as follows. The RecF protein is involved in DNA metabolism; it is required for DNA replication and normal SOS inducibility. RecF binds preferentially to single-stranded, linear DNA. It also seems to bind ATP. This Enterobacter sp. (strain 638) protein is DNA replication and repair protein RecF.